Reading from the N-terminus, the 66-residue chain is Alpha-actitoxin-Ms11a-2 (66 aa).

A signal peptide spans 1 to 24 (MASKIFFVLAVFLVMSAVLPESFA). Disulfide bonds link C26/C41, C33/C46, and C40/C61.

The protein resides in the secreted. It localises to the nematocyst. Functionally, alpha-toxins act on postsynaptic membranes, they bind to the nicotinic acetylcholine receptors (nAChR) and thus inhibit them. This toxin competes with alpha-bungarotoxin for binding to orthosteric sites on muscle-type T.carlifornicus (IC(50)=1080 nM) and human alpha-7/CHRNA7 nAChRs (IC(50)=14.13 uM). The protein is Alpha-actitoxin-Ms11a-2 of Metridium senile (Brown sea anemone).